The sequence spans 776 residues: Lysyl oxidase homolog 2 (776 aa).

Residues 1–25 form the signal peptide; that stretch reads MEIPFGSCLYSCLALLVLLPSLSLA. SRCR domains follow at residues 61–162, 191–305, 329–428, and 438–546; these read VRLA…VVCS, IRPI…VSCV, VRLR…VRCN, and VRLN…VACS. Cystine bridges form between cysteine 87–cysteine 151, cysteine 100–cysteine 161, cysteine 131–cysteine 141, cysteine 221–cysteine 294, cysteine 234–cysteine 304, cysteine 268–cysteine 278, cysteine 354–cysteine 417, cysteine 367–cysteine 427, and cysteine 398–cysteine 408. N-linked (GlcNAc...) asparagine glycosylation occurs at asparagine 267. Asparagine 291 carries an N-linked (GlcNAc...) asparagine glycan. Asparagine 458 carries N-linked (GlcNAc...) asparagine glycosylation. 3 cysteine pairs are disulfide-bonded: cysteine 467-cysteine 532, cysteine 480-cysteine 545, and cysteine 514-cysteine 524. The tract at residues 550-753 is lysyl-oxidase like; sequence PDLVLNAEIV…WMYNCHVGGA (204 aa). Aspartate 551 and leucine 552 together coordinate Ca(2+). 4 disulfides stabilise this stretch: cysteine 575–cysteine 627, cysteine 581–cysteine 697, cysteine 659–cysteine 675, and cysteine 665–cysteine 687. Residues histidine 628, histidine 630, and histidine 632 each coordinate Cu cation. N-linked (GlcNAc...) asparagine glycosylation occurs at asparagine 646. The segment at residues 655–691 is a cross-link (lysine tyrosylquinone (Lys-Tyr)); that stretch reads KASFCLEDTECEGDIQKSYECANFGEQGITMGCWDMY. Tyrosine 691 carries the post-translational modification 2',4',5'-topaquinone. Ca(2+) contacts are provided by glutamate 724, aspartate 726, asparagine 729, and asparagine 730. A disulfide bridge links cysteine 734 with cysteine 748.

The protein belongs to the lysyl oxidase family. As to quaternary structure, component of some chromatin repressor complex. Interacts with SNAI1. Interacts with TAF10. Interacts with HSPA5. Interacts with EFEMP2. Cu cation serves as cofactor. Lysine tyrosylquinone residue is required as a cofactor. In terms of processing, the lysine tyrosylquinone cross-link (LTQ) is generated by condensation of the epsilon-amino group of a lysine with a topaquinone produced by oxidation of tyrosine. Post-translationally, N-glycosylated. N-glycosylation on Asn-458 and Asn-646 may be essential for proper folding and secretion; may be composed of a fucosylated carbohydrates attached to a trimannose N-linked glycan core.

It is found in the secreted. The protein localises to the extracellular space. The protein resides in the extracellular matrix. It localises to the basement membrane. Its subcellular location is the nucleus. It is found in the chromosome. The protein localises to the endoplasmic reticulum. It catalyses the reaction L-lysyl-[protein] + O2 + H2O = (S)-2-amino-6-oxohexanoyl-[protein] + H2O2 + NH4(+). Its activity is regulated as follows. Specifically inhibited by a mouse monoclonal antibody AB0023, inhibition occurs in a non-competitive manner. Its function is as follows. Mediates the post-translational oxidative deamination of lysine residues on target proteins leading to the formation of deaminated lysine (allysine). Acts as a transcription corepressor and specifically mediates deamination of trimethylated 'Lys-4' of histone H3 (H3K4me3), a specific tag for epigenetic transcriptional activation. Shows no activity against histone H3 when it is trimethylated on 'Lys-9' (H3K9me3) or 'Lys-27' (H3K27me3) or when 'Lys-4' is monomethylated (H3K4me1) or dimethylated (H3K4me2). Also mediates deamination of methylated TAF10, a member of the transcription factor IID (TFIID) complex, which induces release of TAF10 from promoters, leading to inhibition of TFIID-dependent transcription. LOXL2-mediated deamination of TAF10 results in transcriptional repression of genes required for embryonic stem cell pluripotency including POU5F1/OCT4, NANOG, KLF4 and SOX2. Involved in epithelial to mesenchymal transition (EMT) via interaction with SNAI1 and participates in repression of E-cadherin CDH1, probably by mediating deamination of histone H3. During EMT, involved with SNAI1 in negatively regulating pericentromeric heterochromatin transcription. SNAI1 recruits LOXL2 to pericentromeric regions to oxidize histone H3 and repress transcription which leads to release of heterochromatin component CBX5/HP1A, enabling chromatin reorganization and acquisition of mesenchymal traits. Interacts with the endoplasmic reticulum protein HSPA5 which activates the IRE1-XBP1 pathway of the unfolded protein response, leading to expression of several transcription factors involved in EMT and subsequent EMT induction. When secreted into the extracellular matrix, promotes cross-linking of extracellular matrix proteins by mediating oxidative deamination of peptidyl lysine residues in precursors to fibrous collagen and elastin. Acts as a regulator of sprouting angiogenesis, probably via collagen IV scaffolding. Acts as a regulator of chondrocyte differentiation, probably by regulating expression of factors that control chondrocyte differentiation. In Rattus norvegicus (Rat), this protein is Lysyl oxidase homolog 2 (Loxl2).